A 185-amino-acid polypeptide reads, in one-letter code: Elongation factor P (185 aa).

This sequence belongs to the elongation factor P family.

It is found in the cytoplasm. It functions in the pathway protein biosynthesis; polypeptide chain elongation. Its function is as follows. Involved in peptide bond synthesis. Stimulates efficient translation and peptide-bond synthesis on native or reconstituted 70S ribosomes in vitro. Probably functions indirectly by altering the affinity of the ribosome for aminoacyl-tRNA, thus increasing their reactivity as acceptors for peptidyl transferase. This chain is Elongation factor P, found in Clostridium novyi (strain NT).